A 949-amino-acid polypeptide reads, in one-letter code: TDRMTSTASAFVDRHVGPDTTELARILDAIGVDSLDELARKAVPESILDTVVDGVPDGLATLPPALSEHDALAALADLAGCNTVATSMIGLGYYDTLTPPVLTRGILENPAWYTAYTPYQPEISQGRLEALLNFQTMVSDLTGMDVANASMLDESTAAAESMTLMRRANRGSKSPRLVVDSDIFPQTKAVLATRAEPLGIELVYADLADGLPEGDFFGVLAQLPGASGRLVDHTATIEAAHERGALVAVGVDLLAATLVTAPGEIGADVCFGTTQRFGVPMGYGGPHAGYLAVRSGHSRQLPGRLVGVSVDADGHRAYRLALQTREQHIRREKATSNICTAQVLLAIVAAMYASYHGADGLRAIARRVNTRARTVAAGLQAAGIDVVHAEFFDTVLAAVPGAAHTVVDAAKQRGINLRPVDDDHVAIACDEATTEAHIVDVLAAFGAEPAGPGAESVPADCARTSEYLTHPAFTRYRTETAMLRYLRALSDKDIALDRSMIPLGSCTMKLNATAEMESITWPQFARQHPFAPSTDVPGLLRVIADLEQWLVDITGYDAVSLQPNAGSQGEYAGLLAIRRYHQANGDTGRTVCLIPSSAHGTNAASAVMVGMRVVVVACRPNGDVDVDDLRAKIAEHADTLAAIMITYPSTHGVYEHEISDICAAVHDAGGQVYVDGANLNALVGLARPGRFGGDVSHLNLHKTFCIPHGGGGPGVGPIGVRSHLQPYLPGHPLAPQLGDGPTVAGAPYGSASILTITWAYIAMMGAQGLRRATLTAIASANYIARRLDEYFPVLYTGDNGMVAHECILDLRGLTKDTGVTVDDVAKRLADYGFHAPTMSFPVPGTLMVEPTESENLEEIDAFCDAMISIRREIDRVGSGEWTVEDNPLRGAPHTAQCLVADWNHPYSRELAAYPAGYDRPKVWPAVRRIDGAHGDRNLVCSCPPIEAFA.

Lys-702 is modified (N6-(pyridoxal phosphate)lysine).

It belongs to the GcvP family. In terms of assembly, the glycine cleavage system is composed of four proteins: P, T, L and H. The cofactor is pyridoxal 5'-phosphate.

The enzyme catalyses N(6)-[(R)-lipoyl]-L-lysyl-[glycine-cleavage complex H protein] + glycine + H(+) = N(6)-[(R)-S(8)-aminomethyldihydrolipoyl]-L-lysyl-[glycine-cleavage complex H protein] + CO2. In terms of biological role, the glycine cleavage system catalyzes the degradation of glycine. The P protein binds the alpha-amino group of glycine through its pyridoxal phosphate cofactor; CO(2) is released and the remaining methylamine moiety is then transferred to the lipoamide cofactor of the H protein. The sequence is that of Glycine dehydrogenase (decarboxylating) from Rhodococcoides fascians (Rhodococcus fascians).